A 222-amino-acid chain; its full sequence is N-(5'-phosphoribosyl)anthranilate isomerase (222 aa).

This sequence belongs to the TrpF family.

The catalysed reaction is N-(5-phospho-beta-D-ribosyl)anthranilate = 1-(2-carboxyphenylamino)-1-deoxy-D-ribulose 5-phosphate. It functions in the pathway amino-acid biosynthesis; L-tryptophan biosynthesis; L-tryptophan from chorismate: step 3/5. This chain is N-(5'-phosphoribosyl)anthranilate isomerase, found in Brevibacillus brevis (strain 47 / JCM 6285 / NBRC 100599).